Consider the following 216-residue polypeptide: MPLFVLSKPITLHFLTQLRSKNTDQITFRKTLVRLGRIIGYEILNMLDYNIIEVETPLGVKAKGVYIYDLENIVIISILRAATPLVEGLLKALPTARLGVIAASRKETQVNLGYPKEMEVEIFYNKIPEINIKDNVIIADPMIATASTMLKALNIIKDKKPKRIFIVSIIISEYGLKRILESYPDVNIITVSIDPELDNRGYILPGLGDAGDRAFG.

Position 30–34 (30–34 (KTLVR)) interacts with GTP. Residues arginine 80, arginine 105, and 140–148 (DPMIATAST) contribute to the 5-phospho-alpha-D-ribose 1-diphosphate site. Uracil is bound by residues isoleucine 203 and 208–210 (GDA). 5-phospho-alpha-D-ribose 1-diphosphate is bound at residue aspartate 209.

The protein belongs to the UPRTase family. Mg(2+) serves as cofactor.

It catalyses the reaction UMP + diphosphate = 5-phospho-alpha-D-ribose 1-diphosphate + uracil. The protein operates within pyrimidine metabolism; UMP biosynthesis via salvage pathway; UMP from uracil: step 1/1. With respect to regulation, allosterically activated by GTP. Catalyzes the conversion of uracil and 5-phospho-alpha-D-ribose 1-diphosphate (PRPP) to UMP and diphosphate. This is Uracil phosphoribosyltransferase from Sulfurisphaera tokodaii (strain DSM 16993 / JCM 10545 / NBRC 100140 / 7) (Sulfolobus tokodaii).